Here is a 309-residue protein sequence, read N- to C-terminus: D-alanine--D-alanine ligase (309 aa).

An ATP-grasp domain is found at 104 to 301 (KQIWQGSDLP…FDALCVEILA (198 aa)). ATP is bound at residue 130-185 (VASLGLPVIIKPVHEGSSIGMSKVEKIEDFAPAIEKATAHDAIVMAEKWITGREYT). The Mg(2+) site is built by D255, E268, and N270.

Belongs to the D-alanine--D-alanine ligase family. The cofactor is Mg(2+). Mn(2+) serves as cofactor.

The protein localises to the cytoplasm. The catalysed reaction is 2 D-alanine + ATP = D-alanyl-D-alanine + ADP + phosphate + H(+). It participates in cell wall biogenesis; peptidoglycan biosynthesis. In terms of biological role, cell wall formation. The polypeptide is D-alanine--D-alanine ligase (Acinetobacter baylyi (strain ATCC 33305 / BD413 / ADP1)).